The following is a 150-amino-acid chain: MKEMVDYGIIGFLIFLSVIVIAIAIERLWFFATLRVDDYTDRRKLELALHKRLTLVATIGSNAPYIGLLGTVMGIMLTFMDLGSASGIDTKAIMTNLALALKATGMGLLVAIPAIVIYNLLVRKSEILVTKWDIFHHPVDTQSHEIYSKA.

Helical transmembrane passes span 5–25, 63–83, and 97–117; these read VDYG…AIAI, APYI…MDLG, and LALA…AIVI.

It belongs to the ExbB/TolQ family.

The protein localises to the cell inner membrane. The protein is Putative biopolymer transport protein ExbB-like 2 of Helicobacter pylori (strain ATCC 700392 / 26695) (Campylobacter pylori).